Here is a 272-residue protein sequence, read N- to C-terminus: Phosphonates import ATP-binding protein PhnC (272 aa).

In terms of domain architecture, ABC transporter spans 2-244; it reads LVFDKVNRVY…IQKRLYEIEH (243 aa). 35-42 lines the ATP pocket; it reads GPSGAGKS.

This sequence belongs to the ABC transporter superfamily. Phosphonates importer (TC 3.A.1.9.1) family. As to quaternary structure, the complex is composed of two ATP-binding proteins (PhnC), two transmembrane proteins (PhnE) and a solute-binding protein (PhnD).

Its subcellular location is the cell inner membrane. The enzyme catalyses phosphonate(out) + ATP + H2O = phosphonate(in) + ADP + phosphate + H(+). Part of the ABC transporter complex PhnCDE involved in phosphonates import. Responsible for energy coupling to the transport system. The polypeptide is Phosphonates import ATP-binding protein PhnC (Hydrogenovibrio crunogenus (strain DSM 25203 / XCL-2) (Thiomicrospira crunogena)).